The chain runs to 685 residues: Galactocerebrosidase (685 aa).

The first 42 residues, 1 to 42 (MAEWLLSASRQRRVKAMTAAAGSAGRAAVPFLLCALLAPGGA), serve as a signal peptide directing secretion. Thr109 serves as a coordination point for substrate. Asn143 carries an N-linked (GlcNAc...) asparagine glycan. 2 residues coordinate substrate: Trp151 and Asn197. The Proton donor/acceptor role is filled by Glu198. Catalysis depends on Glu274, which acts as the Nucleophile. Cysteines 287 and 394 form a disulfide. An N-linked (GlcNAc...) asparagine glycan is attached at Asn379. Arg396 provides a ligand contact to substrate. Asn403, Asn451, Asn556, Asn559, and Asn602 each carry an N-linked (GlcNAc...) asparagine glycan.

The protein belongs to the glycosyl hydrolase 59 family.

Its subcellular location is the lysosome. It carries out the reaction a beta-D-galactosyl-(1&lt;-&gt;1')-N-acylsphing-4-enine + H2O = an N-acylsphing-4-enine + D-galactose. The enzyme catalyses beta-D-galactosyl-(1&lt;-&gt;1)-sphing-4-enine + H2O = sphing-4-enine + D-galactose. It catalyses the reaction a D-galactosylceramide + H2O = an N-acyl-sphingoid base + D-galactose. Hydrolyzes the galactose ester bonds of glycolipids such as galactosylceramide and galactosylsphingosine. Enzyme with very low activity responsible for the lysosomal catabolism of galactosylceramide, a major lipid in myelin, kidney and epithelial cells of small intestine and colon. The polypeptide is Galactocerebrosidase (Macaca mulatta (Rhesus macaque)).